The following is a 512-amino-acid chain: Maturase K (512 aa).

This sequence belongs to the intron maturase 2 family. MatK subfamily.

The protein localises to the plastid. It localises to the chloroplast. Its function is as follows. Usually encoded in the trnK tRNA gene intron. Probably assists in splicing its own and other chloroplast group II introns. In Oenothera biennis (German evening primrose), this protein is Maturase K.